Reading from the N-terminus, the 257-residue chain is 3-methyl-2-oxobutanoate hydroxymethyltransferase (257 aa).

Mg(2+)-binding residues include Asp-42 and Asp-86. 3-methyl-2-oxobutanoate is bound by residues 42 to 43 (DS), Asp-86, and Lys-116. Glu-118 is a binding site for Mg(2+). Glu-185 serves as the catalytic Proton acceptor.

The protein belongs to the PanB family. As to quaternary structure, homodecamer; pentamer of dimers. It depends on Mg(2+) as a cofactor.

It is found in the cytoplasm. It catalyses the reaction 3-methyl-2-oxobutanoate + (6R)-5,10-methylene-5,6,7,8-tetrahydrofolate + H2O = 2-dehydropantoate + (6S)-5,6,7,8-tetrahydrofolate. The protein operates within cofactor biosynthesis; (R)-pantothenate biosynthesis; (R)-pantoate from 3-methyl-2-oxobutanoate: step 1/2. In terms of biological role, catalyzes the reversible reaction in which hydroxymethyl group from 5,10-methylenetetrahydrofolate is transferred onto alpha-ketoisovalerate to form ketopantoate. The sequence is that of 3-methyl-2-oxobutanoate hydroxymethyltransferase from Prochlorococcus marinus (strain AS9601).